A 365-amino-acid chain; its full sequence is Aminomethyltransferase (365 aa).

This sequence belongs to the GcvT family. In terms of assembly, the glycine cleavage system is composed of four proteins: P, T, L and H.

The enzyme catalyses N(6)-[(R)-S(8)-aminomethyldihydrolipoyl]-L-lysyl-[protein] + (6S)-5,6,7,8-tetrahydrofolate = N(6)-[(R)-dihydrolipoyl]-L-lysyl-[protein] + (6R)-5,10-methylene-5,6,7,8-tetrahydrofolate + NH4(+). Its function is as follows. The glycine cleavage system catalyzes the degradation of glycine. The chain is Aminomethyltransferase from Frankia alni (strain DSM 45986 / CECT 9034 / ACN14a).